A 532-amino-acid polypeptide reads, in one-letter code: Variant surface glycoprotein ILTAT 1.23 (532 aa).

The first 23 residues, 1-23 (MFKNINAAVLLLILSTRNDYANA), serve as a signal peptide directing secretion. N66 is a glycosylation site (N-linked (GlcNAc...) asparagine). Disordered regions lie at residues 79–107 (APKK…RNHA) and 408–504 (MQAG…DQDK). The N-linked (GlcNAc...) asparagine glycan is linked to N419. Residues 427-445 (CKWEEKDGKDGKCVADDSK) show a composition bias toward basic and acidic residues. The span at 450–470 (GNAPAGAGDGTAGTTTTPNCA) shows a compositional bias: low complexity. Basic and acidic residues-rich tracts occupy residues 472-484 (HTDK…ENKG) and 494-504 (KGKEGESDQDK). The N-linked (GlcNAc...) asparagine glycan is linked to N509. N509 carries the GPI-anchor amidated asparagine lipid modification. A propeptide spans 510–532 (GSFLAKKKFALSVVSAAFTALLF) (removed in mature form).

It localises to the cell membrane. Its function is as follows. VSG forms a coat on the surface of the parasite. The trypanosome evades the immune response of the host by expressing a series of antigenically distinct VSGs from an estimated 1000 VSG genes. This Trypanosoma brucei brucei protein is Variant surface glycoprotein ILTAT 1.23.